Consider the following 585-residue polypeptide: Probable multidrug resistance ABC transporter ATP-binding/permease protein YheI (585 aa).

The 286-residue stretch at 19–304 (YTIAIVLLLA…IGELINVMQR (286 aa)) folds into the ABC transmembrane type-1 domain. Transmembrane regions (helical) follow at residues 21 to 41 (IAIV…KLLG), 57 to 77 (LLFY…MSYF), 127 to 147 (AVSL…MFMM), 149 to 169 (IFLT…IIPL), 249 to 269 (VKLL…FLVF), and 279 to 299 (VSFN…GELI). Residues 337–572 (IVFSHVSFTY…NGWYREQYER (236 aa)) form the ABC transporter domain. Position 371 to 378 (371 to 378 (GKTGSGKT)) interacts with ATP.

Belongs to the ABC transporter superfamily. In terms of assembly, heterodimer composed of YheH and YheI.

Its subcellular location is the cell membrane. Its activity is regulated as follows. Inhibited by ortho-vanadate. In terms of biological role, involved in the transport of four structurally unrelated drugs, including doxorubicin and mitoxantrone. Transmembrane domains (TMD) form a pore in the membrane and the ATP-binding domain (NBD) is responsible for energy generation. This is Probable multidrug resistance ABC transporter ATP-binding/permease protein YheI (yheI) from Bacillus subtilis (strain 168).